A 623-amino-acid chain; its full sequence is Membrane protein insertase YidC (623 aa).

The helical transmembrane segment at 8 to 28 (LILATGLSFLVIMVWFFLFPP) threads the bilayer. Positions 33–64 (TEGEPTVATQQTAVAPSATPDAPTTAVPPDAD) are disordered. Low complexity predominate over residues 44-62 (TAVAPSATPDAPTTAVPPD). 4 helical membrane passes run 379 to 399 (MGLA…PLAY), 449 to 469 (LPIL…FVTI), 507 to 527 (TTMA…SMWL), and 543 to 563 (IFAW…SGLV). A compositionally biased stretch (low complexity) spans 601-617 (KPAAQPAGKAANDGAAP). The interval 601-623 (KPAAQPAGKAANDGAAPAKKRKP) is disordered.

The protein belongs to the OXA1/ALB3/YidC family. Type 1 subfamily. In terms of assembly, interacts with the Sec translocase complex via SecD. Specifically interacts with transmembrane segments of nascent integral membrane proteins during membrane integration.

Its subcellular location is the cell inner membrane. Functionally, required for the insertion and/or proper folding and/or complex formation of integral membrane proteins into the membrane. Involved in integration of membrane proteins that insert both dependently and independently of the Sec translocase complex, as well as at least some lipoproteins. Aids folding of multispanning membrane proteins. In Cereibacter sphaeroides (strain KD131 / KCTC 12085) (Rhodobacter sphaeroides), this protein is Membrane protein insertase YidC.